The primary structure comprises 626 residues: Cysteine desulfurase (626 aa).

Disordered regions lie at residues 1 to 21 (MTNTVPSVPAVPNLPTQSDPF) and 41 to 64 (AGVSEAESAPTPLSVPTPALPTTS). Positions 1–225 (MTNTVPSVPA…AGAVGFDIHQ (225 aa)) are cargo-loading domain. Residues 226-626 (VRRDFPILQE…RRIQTGSLAL (401 aa)) form a cysteine desulfurase domain region. The residue at position 444 (Lys-444) is an N6-(pyridoxal phosphate)lysine. Residue Cys-582 is the Cysteine persulfide intermediate of the active site.

This sequence belongs to the class-V pyridoxal-phosphate-dependent aminotransferase family. Csd subfamily. There are 1-2 copies of this protein in each type 2A encapsulin shell. Pyridoxal 5'-phosphate serves as cofactor.

The protein localises to the encapsulin nanocompartment. It carries out the reaction (sulfur carrier)-H + L-cysteine = (sulfur carrier)-SH + L-alanine. With respect to regulation, encapsulated enzyme is 7-fold more active than encapsulated enzyme. Functionally, cargo protein of a type 2A encapsulin nanocompartment probably involved in sulfur metabolism. Cysteine desulfurases mobilize the sulfur from L-cysteine to yield L-alanine, an essential step in sulfur metabolism for biosynthesis of a variety of sulfur-containing biomolecules. The chain is Cysteine desulfurase from Synechococcus elongatus (strain ATCC 33912 / PCC 7942 / FACHB-805) (Anacystis nidulans R2).